Here is a 535-residue protein sequence, read N- to C-terminus: Glutamate--cysteine ligase (535 aa).

The protein belongs to the glutamate--cysteine ligase type 1 family. Type 1 subfamily.

It carries out the reaction L-cysteine + L-glutamate + ATP = gamma-L-glutamyl-L-cysteine + ADP + phosphate + H(+). The protein operates within sulfur metabolism; glutathione biosynthesis; glutathione from L-cysteine and L-glutamate: step 1/2. In Pseudomonas syringae pv. syringae, this protein is Glutamate--cysteine ligase.